We begin with the raw amino-acid sequence, 685 residues long: Glycine--tRNA ligase beta subunit (685 aa).

The interval 58 to 77 (GLTAQSPTTREERKGPRTDA) is disordered. Basic and acidic residues predominate over residues 66–77 (TREERKGPRTDA).

The protein belongs to the class-II aminoacyl-tRNA synthetase family. Tetramer of two alpha and two beta subunits.

It localises to the cytoplasm. It carries out the reaction tRNA(Gly) + glycine + ATP = glycyl-tRNA(Gly) + AMP + diphosphate. The sequence is that of Glycine--tRNA ligase beta subunit from Paracoccus denitrificans (strain Pd 1222).